The following is a 205-amino-acid chain: Small ribosomal subunit protein uS4c (205 aa).

Residues 16 to 40 (GKLPSLTNKTSKKRKSPGQPATSFK) are disordered. The 69-residue stretch at 93-161 (MRLDNIVHRI…IQKNIESKEL (69 aa)) folds into the S4 RNA-binding domain.

This sequence belongs to the universal ribosomal protein uS4 family. As to quaternary structure, part of the 30S ribosomal subunit. Contacts protein S5. The interaction surface between S4 and S5 is involved in control of translational fidelity.

It localises to the plastid. It is found in the chloroplast. Functionally, one of the primary rRNA binding proteins, it binds directly to 16S rRNA where it nucleates assembly of the body of the 30S subunit. Its function is as follows. With S5 and S12 plays an important role in translational accuracy. The sequence is that of Small ribosomal subunit protein uS4c (rps4) from Euglena gracilis.